Consider the following 629-residue polypeptide: tRNA uridine 5-carboxymethylaminomethyl modification enzyme MnmG (629 aa).

Residues Gly-13 to Gly-18, Val-125, and Ser-180 each bind FAD. Gly-273–Phe-287 is an NAD(+) binding site. Position 370 (Gln-370) interacts with FAD.

It belongs to the MnmG family. Homodimer. Heterotetramer of two MnmE and two MnmG subunits. The cofactor is FAD.

It is found in the cytoplasm. NAD-binding protein involved in the addition of a carboxymethylaminomethyl (cmnm) group at the wobble position (U34) of certain tRNAs, forming tRNA-cmnm(5)s(2)U34. The chain is tRNA uridine 5-carboxymethylaminomethyl modification enzyme MnmG from Shewanella sp. (strain MR-7).